The following is a 159-amino-acid chain: Cytochrome c-type biogenesis protein CcmE (159 aa).

The Cytoplasmic segment spans residues 1-23; the sequence is MNNSSLENSASLKVILKQRKKKR. A helical; Signal-anchor for type II membrane protein transmembrane segment spans residues 24 to 44; that stretch reads LLIILLCCLVMAIAASLVVYA. Residues 45–159 lie on the Periplasmic side of the membrane; that stretch reads MRHAVSFFRM…RLKKHYSVEK (115 aa). Residues H138 and Y142 each coordinate heme.

The protein belongs to the CcmE/CycJ family.

Its subcellular location is the cell inner membrane. Functionally, heme chaperone required for the biogenesis of c-type cytochromes. Transiently binds heme delivered by CcmC and transfers the heme to apo-cytochromes in a process facilitated by CcmF and CcmH. This is Cytochrome c-type biogenesis protein CcmE from Bartonella tribocorum (strain CIP 105476 / IBS 506).